The sequence spans 439 residues: Leukocyte immunoglobulin-like receptor subfamily A member 3 (439 aa).

The first 23 residues, 1–23, serve as a signal peptide directing secretion; it reads MTPILTVLICLGLSLDPRTHVQA. Ig-like C2-type domains follow at residues 27–108, 119–224, 226–315, and 326–415; these read PKPT…AGLS, TGAY…GVSK, PSLS…DPLD, and PFLS…SDPL. Cysteine 49 and cysteine 98 are disulfide-bonded. Asparagine 140 carries an N-linked (GlcNAc...) asparagine glycan. Disulfide bonds link cysteine 145-cysteine 197, cysteine 157-cysteine 167, and cysteine 246-cysteine 297. N-linked (GlcNAc...) asparagine glycosylation is found at asparagine 281, asparagine 302, and asparagine 341. The cysteines at positions 346 and 397 are disulfide-linked. Asparagine 431 is a glycosylation site (N-linked (GlcNAc...) asparagine).

In terms of processing, N-glycosylation is required for ligand binding. In terms of tissue distribution, detected in B-cells, and at lower levels in natural killer (NK) cells. Detected in peripheral blood monocytes and lung.

Its subcellular location is the secreted. In terms of biological role, acts as a soluble receptor for class I MHC antigens. Binds both classical and non-classical HLA class I molecules but with reduced affinities compared to LILRB1 or LILRB2. Binds with high affinity to the surface of monocytes, leading to abolish LPS-induced TNF-alpha production by monocytes. The polypeptide is Leukocyte immunoglobulin-like receptor subfamily A member 3 (LILRA3) (Homo sapiens (Human)).